Here is a 238-residue protein sequence, read N- to C-terminus: Ankyrin repeat domain-containing protein 49 (238 aa).

Residues 38 to 57 are disordered; it reads TGTQSLWVGNSDEDEEQEEK. The residue at position 48 (Ser-48) is a Phosphoserine. Residues 48–57 are compositionally biased toward acidic residues; that stretch reads SDEDEEQEEK. ANK repeat units lie at residues 72–105, 106–135, 139–168, and 172–205; these read DPSK…TRDE, DEYT…DVHA, DGWT…DINA, and GLLT…ELKN.

In terms of tissue distribution, expressed in spermatogonia, spermatocytes and round spermatids.

It is found in the nucleus. Its function is as follows. May have a role in spermatogenesis where it promotes autophagy in response to serum starvation, via the NF-kappaB pathway. This is Ankyrin repeat domain-containing protein 49 (Ankrd49) from Mus musculus (Mouse).